The following is a 573-amino-acid chain: L-lactate dehydrogenase (cytochrome) (573 aa).

A mitochondrion-targeting transit peptide spans 1–73 (MFKSQLRTAT…LYQKDKFISA (73 aa)). The Cytochrome b5 heme-binding domain occupies 80–157 (DIELTPEIVS…PPEKHLGPLV (78 aa)). H115, H138, and Y208 together coordinate heme b. An FMN hydroxy acid dehydrogenase domain is found at 182 to 542 (PPLSQMINLH…TPELLDTRSI (361 aa)). Y208 is a binding site for pyruvate. Residues 260–263 (SATA), S290, and Q313 each bind FMN. Y315 contributes to the pyruvate binding site. T341 lines the FMN pocket. A heme b-binding site is contributed by K357. An FMN-binding site is contributed by K408. Pyruvate-binding residues include H432 and R435. FMN-binding positions include 468–472 (DGGVR) and 491–492 (GR).

This sequence in the N-terminal section; belongs to the cytochrome b5 family. It in the C-terminal section; belongs to the FMN-dependent alpha-hydroxy acid dehydrogenase family. In terms of assembly, homotetramer. FMN serves as cofactor. It depends on heme b as a cofactor.

The protein localises to the mitochondrion intermembrane space. It catalyses the reaction (S)-lactate + 2 Fe(III)-[cytochrome c] = 2 Fe(II)-[cytochrome c] + pyruvate + 2 H(+). Its function is as follows. Catalyzes the oxidation of (S)-lactate (L-lactate) to pyruvate with subsequent transfer of electrons to cytochrome c. Is involved in the utilization of (S)-lactate as a sole source of carbon for growth. This is L-lactate dehydrogenase (cytochrome) (CYB2) from Wickerhamomyces anomalus (Yeast).